Reading from the N-terminus, the 127-residue chain is Aspartate 1-decarboxylase (127 aa).

Residue Ser25 is the Schiff-base intermediate with substrate; via pyruvic acid of the active site. Ser25 carries the post-translational modification Pyruvic acid (Ser). Thr57 contributes to the substrate binding site. Residue Tyr58 is the Proton donor of the active site. Residue 73-75 (GAA) coordinates substrate.

This sequence belongs to the PanD family. In terms of assembly, heterooctamer of four alpha and four beta subunits. The cofactor is pyruvate. Is synthesized initially as an inactive proenzyme, which is activated by self-cleavage at a specific serine bond to produce a beta-subunit with a hydroxyl group at its C-terminus and an alpha-subunit with a pyruvoyl group at its N-terminus.

The protein localises to the cytoplasm. It catalyses the reaction L-aspartate + H(+) = beta-alanine + CO2. Its pathway is cofactor biosynthesis; (R)-pantothenate biosynthesis; beta-alanine from L-aspartate: step 1/1. Its function is as follows. Catalyzes the pyruvoyl-dependent decarboxylation of aspartate to produce beta-alanine. In Listeria monocytogenes serovar 1/2a (strain ATCC BAA-679 / EGD-e), this protein is Aspartate 1-decarboxylase.